The chain runs to 341 residues: NADH-quinone oxidoreductase subunit H (341 aa).

Helical transmembrane passes span L4–F24, P38–I58, I70–I90, V115–G135, I161–V181, M187–L207, L239–F259, I275–I295, and V314–G334.

This sequence belongs to the complex I subunit 1 family. NDH-1 is composed of 14 different subunits. Subunits NuoA, H, J, K, L, M, N constitute the membrane sector of the complex.

It localises to the cell membrane. The catalysed reaction is a quinone + NADH + 5 H(+)(in) = a quinol + NAD(+) + 4 H(+)(out). Functionally, NDH-1 shuttles electrons from NADH, via FMN and iron-sulfur (Fe-S) centers, to quinones in the respiratory chain. The immediate electron acceptor for the enzyme in this species is believed to be ubiquinone. Couples the redox reaction to proton translocation (for every two electrons transferred, four hydrogen ions are translocated across the cytoplasmic membrane), and thus conserves the redox energy in a proton gradient. This subunit may bind ubiquinone. The protein is NADH-quinone oxidoreductase subunit H of Wolbachia pipientis wMel.